We begin with the raw amino-acid sequence, 147 residues long: Deoxyuridine 5'-triphosphate nucleotidohydrolase (147 aa).

Residues 67–69, N80, and 84–86 each bind substrate; these read RSG and TID.

Belongs to the dUTPase family. Mg(2+) is required as a cofactor.

The catalysed reaction is dUTP + H2O = dUMP + diphosphate + H(+). It functions in the pathway pyrimidine metabolism; dUMP biosynthesis; dUMP from dCTP (dUTP route): step 2/2. This enzyme is involved in nucleotide metabolism: it produces dUMP, the immediate precursor of thymidine nucleotides and it decreases the intracellular concentration of dUTP so that uracil cannot be incorporated into DNA. In Anaeromyxobacter sp. (strain Fw109-5), this protein is Deoxyuridine 5'-triphosphate nucleotidohydrolase.